A 1126-amino-acid polypeptide reads, in one-letter code: Ubiquitin carboxyl-terminal hydrolase 16/45 (1126 aa).

A compositionally biased stretch (basic and acidic residues) spans 1–15 (MVKKRQADSRDHDCS). Residues 1–44 (MVKKRQADSRDHDCSTDSGNEDLHHRKGLGSPGQSDGATPTTAS) form a disordered region. Positions 32-44 (PGQSDGATPTTAS) are enriched in polar residues. A UBP-type zinc finger spans residues 43–181 (ASCQHIKKAV…ELVKKLAQKP (139 aa)). Residues cysteine 45, histidine 47, cysteine 70, cysteine 73, cysteine 111, cysteine 114, cysteine 119, histidine 126, histidine 130, histidine 139, cysteine 152, and cysteine 155 each contribute to the Zn(2+) site. 2 stretches are compositionally biased toward low complexity: residues 215 to 229 (GGSF…SLAA) and 254 to 264 (SSGLSTSDSLT). Residues 215–264 (GGSFDDSSSRGSLAAAGGGGGVGSSRNRQVAIPMPPPEPSSGLSTSDSLT) are disordered. The Nucleophile role is filled by cysteine 315. 3 disordered regions span residues 513–547 (KPQP…INTK), 570–762 (ASLG…SGSS), and 795–833 (EQGA…ARTK). Low complexity predominate over residues 524-539 (PELSLTSSSSSVTPST). Basic residues predominate over residues 586-598 (QRKAKRAAKKRQK). Low complexity-rich tracts occupy residues 599–614 (SSLN…GNEL) and 646–657 (TEDSTTSSVTTS). A compositionally biased stretch (polar residues) spans 674–701 (APSTNNVPSSTASLTAPSKTYMDSNGNA). The segment covering 705–718 (GEKRDDTPEHMDKD) has biased composition (basic and acidic residues). Low complexity predominate over residues 730–762 (ATSPAPTATNSSTSTSATGNNNSVAGSGLSGSS). A compositionally biased stretch (basic and acidic residues) spans 807–816 (GEAKAIEQPE). Low complexity predominate over residues 821-830 (QAQAMAQAQA). The Proton acceptor role is filled by histidine 984. Residues 1037 to 1089 (LKVLDDSDDFSNSSSNSSTSDESQTPATPLEEQQTQQAQQPQQPQQLEEAANV) are disordered. Positions 1046–1086 (FSNSSSNSSTSDESQTPATPLEEQQTQQAQQPQQPQQLEEA) are enriched in low complexity.

The protein belongs to the peptidase C19 family.

It catalyses the reaction Thiol-dependent hydrolysis of ester, thioester, amide, peptide and isopeptide bonds formed by the C-terminal Gly of ubiquitin (a 76-residue protein attached to proteins as an intracellular targeting signal).. Involved in the regulation of DNA damage repair. The chain is Ubiquitin carboxyl-terminal hydrolase 16/45 from Drosophila melanogaster (Fruit fly).